Here is a 297-residue protein sequence, read N- to C-terminus: Glycerol-3-phosphate dehydrogenase [NAD(P)+] (297 aa).

NADPH contacts are provided by W11, R33, and K79. K79, G107, and S109 together coordinate sn-glycerol 3-phosphate. Residue A111 participates in NADPH binding. Sn-glycerol 3-phosphate-binding residues include K161, D214, S224, R225, and N226. K161 (proton acceptor) is an active-site residue. R225 contributes to the NADPH binding site. V249 and E251 together coordinate NADPH.

The protein belongs to the NAD-dependent glycerol-3-phosphate dehydrogenase family.

The protein resides in the cytoplasm. The enzyme catalyses sn-glycerol 3-phosphate + NAD(+) = dihydroxyacetone phosphate + NADH + H(+). The catalysed reaction is sn-glycerol 3-phosphate + NADP(+) = dihydroxyacetone phosphate + NADPH + H(+). The protein operates within membrane lipid metabolism; glycerophospholipid metabolism. Its function is as follows. Catalyzes the reduction of the glycolytic intermediate dihydroxyacetone phosphate (DHAP) to sn-glycerol 3-phosphate (G3P), the key precursor for phospholipid synthesis. This chain is Glycerol-3-phosphate dehydrogenase [NAD(P)+], found in Campylobacter jejuni subsp. jejuni serotype O:23/36 (strain 81-176).